Here is a 38-residue protein sequence, read N- to C-terminus: MTQSNPNEQNVELNRTSLYWGLLLIFVLAVLFSNYFFN.

Residues 17 to 37 (SLYWGLLLIFVLAVLFSNYFF) form a helical membrane-spanning segment.

The protein belongs to the PsbL family. As to quaternary structure, PSII is composed of 1 copy each of membrane proteins PsbA, PsbB, PsbC, PsbD, PsbE, PsbF, PsbH, PsbI, PsbJ, PsbK, PsbL, PsbM, PsbT, PsbX, PsbY, PsbZ, Psb30/Ycf12, at least 3 peripheral proteins of the oxygen-evolving complex and a large number of cofactors. It forms dimeric complexes.

The protein resides in the plastid. Its subcellular location is the chloroplast thylakoid membrane. Functionally, one of the components of the core complex of photosystem II (PSII). PSII is a light-driven water:plastoquinone oxidoreductase that uses light energy to abstract electrons from H(2)O, generating O(2) and a proton gradient subsequently used for ATP formation. It consists of a core antenna complex that captures photons, and an electron transfer chain that converts photonic excitation into a charge separation. This subunit is found at the monomer-monomer interface and is required for correct PSII assembly and/or dimerization. The chain is Photosystem II reaction center protein L from Ananas comosus (Pineapple).